The following is a 63-amino-acid chain: Large ribosomal subunit protein uL29 (63 aa).

It belongs to the universal ribosomal protein uL29 family.

This chain is Large ribosomal subunit protein uL29, found in Edwardsiella ictaluri (strain 93-146).